Reading from the N-terminus, the 500-residue chain is Probable cytosol aminopeptidase (500 aa).

Mn(2+) is bound by residues Lys264 and Asp269. Lys276 is a catalytic residue. The Mn(2+) site is built by Asp287, Asp346, and Glu348. Arg350 is a catalytic residue.

The protein belongs to the peptidase M17 family. Mn(2+) serves as cofactor.

The protein resides in the cytoplasm. It catalyses the reaction Release of an N-terminal amino acid, Xaa-|-Yaa-, in which Xaa is preferably Leu, but may be other amino acids including Pro although not Arg or Lys, and Yaa may be Pro. Amino acid amides and methyl esters are also readily hydrolyzed, but rates on arylamides are exceedingly low.. It carries out the reaction Release of an N-terminal amino acid, preferentially leucine, but not glutamic or aspartic acids.. Its function is as follows. Presumably involved in the processing and regular turnover of intracellular proteins. Catalyzes the removal of unsubstituted N-terminal amino acids from various peptides. The polypeptide is Probable cytosol aminopeptidase (Chlamydia abortus (strain DSM 27085 / S26/3) (Chlamydophila abortus)).